Here is a 648-residue protein sequence, read N- to C-terminus: Exoribonuclease 2 (648 aa).

The RNB domain maps to 191–518; sequence RIDLTYLDFI…INHRLIKSII (328 aa). Residues 565-647 form the S1 motif domain; the sequence is KKKYQANIID…GNKKIIATMI (83 aa).

This sequence belongs to the RNR ribonuclease family. RNase II subfamily.

The protein localises to the cytoplasm. The catalysed reaction is Exonucleolytic cleavage in the 3'- to 5'-direction to yield nucleoside 5'-phosphates.. Functionally, involved in mRNA degradation. Hydrolyzes single-stranded polyribonucleotides processively in the 3' to 5' direction. The protein is Exoribonuclease 2 of Buchnera aphidicola subsp. Cinara cedri (strain Cc).